The chain runs to 337 residues: Glycerol-3-phosphate dehydrogenase [NAD(P)+] (337 aa).

Positions 12, 13, and 110 each coordinate NADPH. Residues lysine 110, glycine 141, and serine 143 each contribute to the sn-glycerol 3-phosphate site. Alanine 145 is a binding site for NADPH. Residues lysine 196, aspartate 249, serine 259, arginine 260, and asparagine 261 each contribute to the sn-glycerol 3-phosphate site. Lysine 196 functions as the Proton acceptor in the catalytic mechanism. An NADPH-binding site is contributed by arginine 260. 2 residues coordinate NADPH: valine 284 and glutamate 286.

Belongs to the NAD-dependent glycerol-3-phosphate dehydrogenase family.

Its subcellular location is the cytoplasm. It catalyses the reaction sn-glycerol 3-phosphate + NAD(+) = dihydroxyacetone phosphate + NADH + H(+). The enzyme catalyses sn-glycerol 3-phosphate + NADP(+) = dihydroxyacetone phosphate + NADPH + H(+). The protein operates within membrane lipid metabolism; glycerophospholipid metabolism. Its function is as follows. Catalyzes the reduction of the glycolytic intermediate dihydroxyacetone phosphate (DHAP) to sn-glycerol 3-phosphate (G3P), the key precursor for phospholipid synthesis. The sequence is that of Glycerol-3-phosphate dehydrogenase [NAD(P)+] from Levilactobacillus brevis (strain ATCC 367 / BCRC 12310 / CIP 105137 / JCM 1170 / LMG 11437 / NCIMB 947 / NCTC 947) (Lactobacillus brevis).